Consider the following 159-residue polypeptide: Phosphopantetheine adenylyltransferase (159 aa).

Serine 8 is a binding site for substrate. ATP-binding positions include 8–9 (SF) and histidine 16. Lysine 40, leucine 72, and arginine 86 together coordinate substrate. Residues 87-89 (GLR), glutamate 97, and 122-128 (YSFISSS) contribute to the ATP site.

It belongs to the bacterial CoaD family. Homohexamer. Requires Mg(2+) as cofactor.

It localises to the cytoplasm. It carries out the reaction (R)-4'-phosphopantetheine + ATP + H(+) = 3'-dephospho-CoA + diphosphate. The protein operates within cofactor biosynthesis; coenzyme A biosynthesis; CoA from (R)-pantothenate: step 4/5. Its function is as follows. Reversibly transfers an adenylyl group from ATP to 4'-phosphopantetheine, yielding dephospho-CoA (dPCoA) and pyrophosphate. This chain is Phosphopantetheine adenylyltransferase, found in Thermosipho melanesiensis (strain DSM 12029 / CIP 104789 / BI429).